The chain runs to 210 residues: Putative protein-lysine deacylase ABHD14B (210 aa).

The residue at position 2 (Ala2) is an N-acetylalanine. Ser91 is subject to Phosphoserine. Active-site charge relay system residues include Ser111, Asp162, and His188.

The protein belongs to the AB hydrolase superfamily. ABHD14 family. As to quaternary structure, may interact with TAF1. As to expression, ubiquitous. Detected in spleen, thymus, prostate, testis, ovary, small intestine, colon, peripheral blood leukocyte, heart, placenta, lung, liver, skeletal muscle, pancreas and kidney.

The protein resides in the cytoplasm. The protein localises to the nucleus. It catalyses the reaction L-lysyl-[protein] + acetyl-CoA = N(6)-acetyl-L-lysyl-[protein] + CoA + H(+). Functionally, acts as an atypical protein-lysine deacetylase in vitro. Catalyzes the deacetylation of lysine residues using CoA as substrate, generating acetyl-CoA and the free amine of protein-lysine residues. Additional experiments are however required to confirm the protein-lysine deacetylase activity in vivo. Has hydrolase activity towards various surrogate p-nitrophenyl (pNp) substrates, such as pNp-butyrate, pNp-acetate and pNp-octanoate in vitro, with a strong preference for pNp-acetate. May activate transcription. This is Putative protein-lysine deacylase ABHD14B from Homo sapiens (Human).